A 95-amino-acid polypeptide reads, in one-letter code: Glutamine synthetase and cystathionine beta-lyase binding protein (95 aa).

In terms of assembly, interacts with glutamine synthetase (TTHA1329) and cystathionine beta-lyase (TTHA1620), but proteins do not form a ternary complex.

In terms of biological role, binds to glutamine synthetase and cystathionine beta-lyase. May be utilized for the efficient use of nitrogen in the global nitrogen regulation of T.thermophilus. The polypeptide is Glutamine synthetase and cystathionine beta-lyase binding protein (Thermus thermophilus (strain ATCC 27634 / DSM 579 / HB8)).